The sequence spans 412 residues: Lipoyl synthase, mitochondrial (412 aa).

Residues Cys127, Cys132, Cys138, Cys159, Cys163, Cys166, and Ser375 each contribute to the [4Fe-4S] cluster site. The region spanning 142–364 (SDDEGTATAT…EKEAMDMGFL (223 aa)) is the Radical SAM core domain.

It belongs to the radical SAM superfamily. Lipoyl synthase family. The cofactor is [4Fe-4S] cluster.

The protein localises to the mitochondrion. The catalysed reaction is [[Fe-S] cluster scaffold protein carrying a second [4Fe-4S](2+) cluster] + N(6)-octanoyl-L-lysyl-[protein] + 2 oxidized [2Fe-2S]-[ferredoxin] + 2 S-adenosyl-L-methionine + 4 H(+) = [[Fe-S] cluster scaffold protein] + N(6)-[(R)-dihydrolipoyl]-L-lysyl-[protein] + 4 Fe(3+) + 2 hydrogen sulfide + 2 5'-deoxyadenosine + 2 L-methionine + 2 reduced [2Fe-2S]-[ferredoxin]. The protein operates within protein modification; protein lipoylation via endogenous pathway; protein N(6)-(lipoyl)lysine from octanoyl-[acyl-carrier-protein]: step 2/2. Functionally, catalyzes the radical-mediated insertion of two sulfur atoms into the C-6 and C-8 positions of the octanoyl moiety bound to the lipoyl domains of lipoate-dependent enzymes, thereby converting the octanoylated domains into lipoylated derivatives. This Leishmania infantum protein is Lipoyl synthase, mitochondrial.